The following is a 61-amino-acid chain: uncharacterized protein (61 aa).

Helical transmembrane passes span 5 to 25 (MLYFLIYFAVTHLPSLISLLL) and 29 to 49 (YILTLLFIVLHILFIWLPWYT).

Its subcellular location is the membrane. This is an uncharacterized protein from Saccharomyces cerevisiae (strain ATCC 204508 / S288c) (Baker's yeast).